The chain runs to 380 residues: ATP phosphoribosyltransferase regulatory subunit (380 aa).

This sequence belongs to the class-II aminoacyl-tRNA synthetase family. HisZ subfamily. Heteromultimer composed of HisG and HisZ subunits.

The protein localises to the cytoplasm. It functions in the pathway amino-acid biosynthesis; L-histidine biosynthesis; L-histidine from 5-phospho-alpha-D-ribose 1-diphosphate: step 1/9. Functionally, required for the first step of histidine biosynthesis. May allow the feedback regulation of ATP phosphoribosyltransferase activity by histidine. The protein is ATP phosphoribosyltransferase regulatory subunit of Thermoanaerobacter sp. (strain X514).